A 144-amino-acid polypeptide reads, in one-letter code: Leghemoglobin-1 (144 aa).

The 143-residue stretch at 2-144 (GFTEKQEALV…DGLATAIKAA (143 aa)) folds into the Globin domain. A nitrated tyrosine mark is found at Tyr-25 and Tyr-30. Ser-45 contributes to the heme b binding site. A Phosphoserine modification is found at Ser-45. His-62 is a binding site for O2. Positions 65, 93, and 96 each coordinate heme b. Tyr-134 bears the Nitrated tyrosine mark.

This sequence belongs to the plant globin family. As to quaternary structure, monomer. Post-translationally, nitrated in effective nodules and particularly in hypoxic conditions; this mechanism may play a protective role in the symbiosis by buffering toxic peroxynitrite NO(2)(-). Nitration level decrease during nodule senescence. Phosphorylation at Ser-45 disrupts the molecular environment of its porphyrin ring oxygen binding pocket, thus leading to a reduced oxygen consumption and to the delivery of oxygen O(2) to symbiosomes. As to expression, root nodules.

It localises to the cytoplasm. The protein localises to the cytosol. The protein resides in the nucleus. Leghemoglobin that reversibly binds oxygen O(2) through a pentacoordinated heme iron. In root nodules, facilitates the diffusion of oxygen to the bacteroids while preventing the bacterial nitrogenase from being inactivated by buffering dioxygen, nitric oxide and carbon monoxide, and promoting the formation of reactive oxygen species (ROS, e.g. H(2)O(2)). This role is essential for symbiotic nitrogen fixation (SNF). This is Leghemoglobin-1 from Vicia faba (Broad bean).